The sequence spans 231 residues: U1 small nuclear ribonucleoprotein C (231 aa).

The segment at 4-36 (YYCEYCHSYLTHDTLSVRKSHLVGKNHLRITAD) adopts a Matrin-type zinc-finger fold. Basic residues predominate over residues 49 to 61 (HNHKRRHIGKRGR). 3 disordered regions span residues 49-71 (HNHK…SQNE), 137-177 (PQRA…LEPP), and 205-231 (ESKK…RYGN).

This sequence belongs to the U1 small nuclear ribonucleoprotein C family. As to quaternary structure, U1 snRNP is composed of the 7 core Sm proteins SMB1, SMD1, SMD2, SMD3, SME1, SMX3 and SMX2 (Sm proteins B, D1, D2, D3, E, F and G, respectively) that assemble in a heptameric protein ring on the Sm site of the small nuclear RNA to form the core snRNP, and at least 10 U1 snRNP-specific proteins SNP1/U1-70K, MUD1/U1-A, YHC1/U1-C, LUC7, NAM8, PRP39, PRP40, PRP42, SNU56 and SNU71. YHC1/U1-C interacts with U1 snRNA and the 5' splice-site region of the pre-mRNA.

The protein resides in the nucleus. Functionally, component of the spliceosomal U1 snRNP, which is essential for recognition of the pre-mRNA 5' splice-site and the subsequent assembly of the spliceosome. YHC1/U1-C is directly involved in initial 5' splice-site recognition for both constitutive and regulated alternative splicing. The interaction with the 5' splice-site seems to precede base-pairing between the pre-mRNA and the U1 snRNA. Stimulates commitment or early (E) complex formation by stabilizing the base pairing of the 5' end of the U1 snRNA and the 5' splice-site region. This Saccharomyces cerevisiae (strain ATCC 204508 / S288c) (Baker's yeast) protein is U1 small nuclear ribonucleoprotein C.